Here is a 785-residue protein sequence, read N- to C-terminus: Probable serine protease Ga0098714_109514 (785 aa).

Basic and acidic residues-rich tracts occupy residues 470–481 (LDHGKNGREGGR) and 491–501 (DGPEHPNHYAD). Disordered regions lie at residues 470 to 503 (LDHG…ADID) and 608 to 629 (DGDA…EEVS).

Belongs to the peptidase S1 family.

Functionally, probably a dedicated protease for substrate gasdermin bGSDM; cleaves the bGSDM precursor, releasing the pore-forming moiety, which integrates into the membrane and triggers cell death. Involved in defense against bacteriophages. Expression of gasdermin bGSDM and this neighboring protease is toxic in E.coli on solid medium. This is Probable serine protease Ga0098714_109514 from Bradyrhizobium tropiciagri.